Reading from the N-terminus, the 281-residue chain is Probable short-chain type dehydrogenase/reductase blr2146 (281 aa).

Position 10–34 (10–34 (VVTGAGAGIGKACALAIAREGGRVV)) interacts with NAD(+). Ser146 contacts substrate. Tyr159 serves as the catalytic Proton acceptor. The disordered stretch occupies residues 261–281 (GNSRAARPAGETAEADAAPRC).

This sequence belongs to the short-chain dehydrogenases/reductases (SDR) family.

The polypeptide is Probable short-chain type dehydrogenase/reductase blr2146 (Bradyrhizobium diazoefficiens (strain JCM 10833 / BCRC 13528 / IAM 13628 / NBRC 14792 / USDA 110)).